Consider the following 35-residue polypeptide: Cupiennin-2d (35 aa).

A Glutamine amide modification is found at glutamine 35.

In terms of tissue distribution, expressed by the venom gland.

The protein resides in the secreted. The chain is Cupiennin-2d from Cupiennius salei (American wandering spider).